The following is a 685-amino-acid chain: Serine/threonine-protein kinase PLK2 (685 aa).

The disordered stretch occupies residues 24-71; the sequence is KGCGADSKKKRPPQPPEESQPPQSQAQVPPAAAHHHHHHSHSGPEISR. Over residues 43–55 the composition is skewed to low complexity; it reads QPPQSQAQVPPAA. One can recognise a Protein kinase domain in the interval 82 to 334; sequence YCRGKVLGKG…LDDIIRHDFF (253 aa). ATP is bound by residues 88 to 96 and Lys-111; that span reads LGKGGFAKC. The Proton acceptor role is filled by Asp-205. Thr-239 carries the post-translational modification Phosphothreonine. The segment at 406–433 is disordered; that stretch reads SITQQPSKHRTDEELQPPTTTVARSGTP. POLO box domains lie at 503–581 and 601–685; these read WVTK…YMEE and YLLQ…QRCN.

It belongs to the protein kinase superfamily. Ser/Thr protein kinase family. CDC5/Polo subfamily. Interacts with NSF; causing NSF dissociation from GRIA2. Interacts with CIB1. Post-translationally, catalytic activity is enhanced by phosphorylation of Thr-239.

The protein resides in the cytoplasm. The protein localises to the cytoskeleton. It localises to the microtubule organizing center. Its subcellular location is the centrosome. It is found in the centriole. The protein resides in the cell projection. The protein localises to the dendrite. The catalysed reaction is L-seryl-[protein] + ATP = O-phospho-L-seryl-[protein] + ADP + H(+). It catalyses the reaction L-threonyl-[protein] + ATP = O-phospho-L-threonyl-[protein] + ADP + H(+). With respect to regulation, activated by phosphorylation of Thr-239. Once activated, activity is stimulated by binding target proteins. In terms of biological role, tumor suppressor serine/threonine-protein kinase involved in synaptic plasticity, centriole duplication and G1/S phase transition. Polo-like kinases act by binding and phosphorylating proteins that are already phosphorylated on a specific motif recognized by the POLO box domains. Phosphorylates CPAP, NPM1, RAPGEF2, RASGRF1, SNCA, SIPA1L1 and SYNGAP1. Plays a key role in synaptic plasticity and memory by regulating the Ras and Rap protein signaling: required for overactivity-dependent spine remodeling by phosphorylating the Ras activator RASGRF1 and the Rap inhibitor SIPA1L1 leading to their degradation by the proteasome. Conversely, phosphorylates the Rap activator RAPGEF2 and the Ras inhibitor SYNGAP1, promoting their activity. Also regulates synaptic plasticity independently of kinase activity, via its interaction with NSF that disrupts the interaction between NSF and the GRIA2 subunit of AMPARs, leading to a rapid rundown of AMPAR-mediated current that occludes long term depression. Required for procentriole formation and centriole duplication by phosphorylating CPAP and NPM1, respectively. Its induction by p53/TP53 suggests that it may participate in the mitotic checkpoint following stress. The protein is Serine/threonine-protein kinase PLK2 (PLK2) of Pongo abelii (Sumatran orangutan).